Here is a 506-residue protein sequence, read N- to C-terminus: Protein NEN3 (506 aa).

The 162-residue stretch at 15–176 (FFDLETAVPT…LDDVRMNLEV (162 aa)) folds into the Exonuclease domain. Residues aspartate 17 and glutamate 19 each coordinate Mg(2+). The active-site Proton donor/acceptor is the histidine 164. Aspartate 169 lines the Mg(2+) pocket. Disordered stretches follow at residues 204–240 (KSPR…SSVD) and 289–313 (AEEA…KDES). Positions 222–238 (SSTSSSSSPKTDPSSSS) are enriched in low complexity. Basic and acidic residues predominate over residues 290–299 (EEAKTVRQQD).

The cofactor is Mg(2+).

In terms of biological role, probable exonuclease that may be involved in enuclation of sieve elements. The polypeptide is Protein NEN3 (NEN3) (Arabidopsis thaliana (Mouse-ear cress)).